The chain runs to 63 residues: Large ribosomal subunit protein uL29 (63 aa).

This sequence belongs to the universal ribosomal protein uL29 family.

This chain is Large ribosomal subunit protein uL29, found in Psychromonas ingrahamii (strain DSM 17664 / CCUG 51855 / 37).